The primary structure comprises 1088 residues: Ran-binding protein 17 (1088 aa).

Alanine 2 bears the N-acetylalanine mark. Position 569 is a phosphoserine (serine 569).

The protein belongs to the exportin family. As to quaternary structure, binds to nucleoporins and the GTP-bound form of Ran. Highly expressed in testis, moderately in pancreas and weakly in other tissues studied.

It is found in the cytoplasm. It localises to the nucleus. The protein localises to the nuclear pore complex. Its function is as follows. May function as a nuclear transport receptor. The sequence is that of Ran-binding protein 17 (RANBP17) from Homo sapiens (Human).